A 615-amino-acid chain; its full sequence is Putative binding protein BruAb2_0648 (615 aa).

The signal sequence occupies residues Met1–Ala29.

This sequence belongs to the bacterial solute-binding protein 5 family.

It localises to the periplasm. This is Putative binding protein BruAb2_0648 from Brucella abortus biovar 1 (strain 9-941).